Consider the following 275-residue polypeptide: Coagulation factor IX (275 aa).

Tyr23 bears the Sulfotyrosine mark. N-linked (GlcNAc...) asparagine glycosylation occurs at Asn25. Phosphothreonine is present on Thr27. Asn35 carries an N-linked (GlcNAc...) asparagine glycan. Thr47 is a glycosylation site (O-linked (GalNAc...) threonine). Positions 49–275 (IVGGENAKPG…YTRVSWYVNW (227 aa)) constitute a Peptidase S1 domain. A disulfide bridge links Cys74 with Cys90. Residue His89 is the Charge relay system of the active site. N-linked (GlcNAc...) asparagine glycosylation occurs at Asn96. Ca(2+) is bound by residues Glu103, Asn105, Glu108, Glu110, and Glu113. A glycan (N-linked (GlcNAc...) asparagine) is linked at Asn128. Residue Asp137 is the Charge relay system of the active site. Cystine bridges form between Cys204/Cys218 and Cys229/Cys257. The active-site Charge relay system is Ser233.

The protein belongs to the peptidase S1 family. Heterodimer of a light chain and a heavy chain; disulfide-linked. Interacts (inactive and activated) with F11 (activated) in calcium-dependent manner. Interacts with SERPINC1. In terms of processing, activated by factor XIa, which excises the activation peptide. The propeptide can also be removed by snake venom protease. Activated by coagulation factor VIIa-tissue factor (F7-F3) complex in calcium-dependent manner.

The protein localises to the secreted. The catalysed reaction is Selective cleavage of Arg-|-Ile bond in factor X to form factor Xa.. Factor IX is a vitamin K-dependent plasma protein that participates in the intrinsic pathway of blood coagulation by converting factor X to its active form in the presence of Ca(2+) ions, phospholipids, and factor VIIIa. This chain is Coagulation factor IX (F9), found in Oryctolagus cuniculus (Rabbit).